A 225-amino-acid chain; its full sequence is Membrane protein LapB (225 aa).

It to H.influenzae HI_1119.

The protein resides in the cell membrane. The chain is Membrane protein LapB (lapB) from Mannheimia haemolytica (Pasteurella haemolytica).